The chain runs to 124 residues: Small ribosomal subunit protein bS6 (124 aa).

It belongs to the bacterial ribosomal protein bS6 family.

Functionally, binds together with bS18 to 16S ribosomal RNA. The protein is Small ribosomal subunit protein bS6 of Chromobacterium violaceum (strain ATCC 12472 / DSM 30191 / JCM 1249 / CCUG 213 / NBRC 12614 / NCIMB 9131 / NCTC 9757 / MK).